The chain runs to 504 residues: Sperm motility kinase 3A (504 aa).

A Protein kinase domain is found at 28–276 (YVMLETIGHG…VAEVMVHPWV (249 aa)). Residues 34–42 (IGHGGCATV) and Lys-57 each bind ATP. Asp-147 serves as the catalytic Proton acceptor. The UBA domain occupies 294–334 (KPDPAIVKAMGHIGFQAQDIEDSLRQRKFNQTMASYCLLKK). Disordered regions lie at residues 389–421 (VCGK…MDHT) and 441–468 (NSSE…WPRG). A compositionally biased stretch (polar residues) spans 441–451 (NSSEESTQGHT).

This sequence belongs to the protein kinase superfamily. CAMK Ser/Thr protein kinase family. Smok subfamily. Testis-specific. Expressed in the testis from 22 days postpartum (22 dpp).

It catalyses the reaction L-seryl-[protein] + ATP = O-phospho-L-seryl-[protein] + ADP + H(+). It carries out the reaction L-threonyl-[protein] + ATP = O-phospho-L-threonyl-[protein] + ADP + H(+). In terms of biological role, may play a role in sperm motility, especially in the regulation of flagellar function. The chain is Sperm motility kinase 3A from Mus musculus (Mouse).